Here is a 40-residue protein sequence, read N- to C-terminus: uncharacterized protein (40 aa).

This is an uncharacterized protein from Acheta domesticus (House cricket).